Consider the following 883-residue polypeptide: Receptor-like protein 40 (883 aa).

The N-terminal stretch at 1 to 21 (MSELLFSLNFLLLLLLSCVSP) is a signal peptide. Topologically, residues 22–846 (SSFFTFNNPV…EDEQVLNWKA (825 aa)) are extracellular. N-linked (GlcNAc...) asparagine glycans are attached at residues Asn-58, Asn-91, and Asn-109. LRR repeat units follow at residues 97-121 (FHHL…KFGM) and 122-143 (LNNL…PFSF). Asn-145 carries N-linked (GlcNAc...) asparagine glycosylation. LRR repeat units follow at residues 146–169 (LSML…ARNL), 170–195 (RKLR…LFEL), 197–219 (HIIY…EFGN), 220–244 (LNKL…ISNL), 246–267 (QLTE…VQNL), 268–291 (TKLS…LFTM), 293–316 (FLSY…SSSS), 317–340 (SRLE…ISKL), 342–364 (NLKE…LFSS), 365–390 (LKSL…SYIP), 391–412 (STLE…VFKT), 413–437 (LHNL…LWSL), 439–462 (RLSS…VLVN), and 463–486 (SSVQ…PLSI). 4 N-linked (GlcNAc...) asparagine glycosylation sites follow: Asn-189, Asn-207, Asn-243, and Asn-266. Asn-305 and Asn-312 each carry an N-linked (GlcNAc...) asparagine glycan. Residue Asn-352 is glycosylated (N-linked (GlcNAc...) asparagine). N-linked (GlcNAc...) asparagine glycosylation is present at Asn-462. An LRR 17; degenerate repeat occupies 487–506 (NYFSAIDNRFGGDIPLSICN). N-linked (GlcNAc...) asparagine glycosylation is found at Asn-506 and Asn-519. LRR repeat units follow at residues 507–528 (RSSL…PPCL), 529–552 (SNLL…YYED), 554–576 (PLRS…LINC), 578–600 (ALQF…LKAL), 601–624 (PKLQ…NEGP), 627–651 (FPEL…FFVN), 701–724 (TSSA…IGLL), 725–747 (KALI…SFAN), 748–772 (LKKM…LRTL), and 774–797 (FLAY…QITG). A glycan (N-linked (GlcNAc...) asparagine) is linked at Asn-575. N-linked (GlcNAc...) asparagine glycosylation is present at Asn-731. An N-linked (GlcNAc...) asparagine glycan is attached at Asn-779. The chain crosses the membrane as a helical span at residues 847 to 867 (VAIGYGIGVLLGLAIAQLISL). Over 868-883 (YKPKWLASLVIKSRNC) the chain is Cytoplasmic.

It belongs to the RLP family.

The protein resides in the cell membrane. The polypeptide is Receptor-like protein 40 (Arabidopsis thaliana (Mouse-ear cress)).